The chain runs to 819 residues: Protein EFR3 homolog A (819 aa).

The interval Asp-210 to Pro-230 is disordered.

It belongs to the EFR3 family. As to quaternary structure, component of a phosphatidylinositol 4-kinase (PI4K) complex. In terms of processing, palmitoylated at its N-terminus, anchoring the protein to the plasma membrane.

Its subcellular location is the cell membrane. In terms of biological role, component of a complex required to localize phosphatidylinositol 4-kinase (PI4K) to the plasma membrane. The complex acts as a regulator of phosphatidylinositol 4-phosphate (PtdIns(4)P) synthesis. In the complex, efr3a probably acts as the membrane-anchoring component. This is Protein EFR3 homolog A (efr3a) from Xenopus laevis (African clawed frog).